Reading from the N-terminus, the 511-residue chain is NAD(P)H-quinone oxidoreductase subunit 2, chloroplastic (511 aa).

14 helical membrane passes run 15–35 (LLPE…DLTF), 39–59 (VLSW…VVLL), 78–98 (SLSI…ILLS), 108–128 (ALTE…LLSG), 132–152 (LIMI…LTGY), 167–187 (LLIG…LYGL), 210–230 (FASW…VAAA), 244–264 (PTPV…ALAT), 278–298 (WHLL…LIAI), 306–326 (MLGY…IAGN), 334–354 (LVYM…IILF), 377–397 (VFCF…AGFF), 410–430 (GFYI…YYYL), and 466–486 (LGIG…NPII).

This sequence belongs to the complex I subunit 2 family. NDH is composed of at least 16 different subunits, 5 of which are encoded in the nucleus.

It localises to the plastid. It is found in the chloroplast thylakoid membrane. It carries out the reaction a plastoquinone + NADH + (n+1) H(+)(in) = a plastoquinol + NAD(+) + n H(+)(out). It catalyses the reaction a plastoquinone + NADPH + (n+1) H(+)(in) = a plastoquinol + NADP(+) + n H(+)(out). Its function is as follows. NDH shuttles electrons from NAD(P)H:plastoquinone, via FMN and iron-sulfur (Fe-S) centers, to quinones in the photosynthetic chain and possibly in a chloroplast respiratory chain. The immediate electron acceptor for the enzyme in this species is believed to be plastoquinone. Couples the redox reaction to proton translocation, and thus conserves the redox energy in a proton gradient. This Chlorokybus atmophyticus (Soil alga) protein is NAD(P)H-quinone oxidoreductase subunit 2, chloroplastic.